The following is a 724-amino-acid chain: Palmitoyltransferase AKR1 (724 aa).

Over 1 to 308 the chain is Cytoplasmic; the sequence is MSGQLNVAED…HAKMVTFFTP (308 aa). ANK repeat units follow at residues 54-84, 90-119, 124-153, 157-187, 191-220, and 224-253; these read PTLV…DVKA, EQVS…DVNI, LEAT…DPLI, QGYN…PVDS, TGKT…DVRV, and GGFT…DVFL. The chain crosses the membrane as a helical span at residues 309–329; the sequence is WLILGLILSFFAYFSILLAIL. At 330–331 the chain is on the lumenal side; the sequence is GC. The helical transmembrane segment at 332–352 threads the bilayer; the sequence is LLTVLAAGYGLYNFVFPSFIL. The Cytoplasmic portion of the chain corresponds to 353 to 360; sequence MKRIVIFK. The helical transmembrane segment at 361-381 threads the bilayer; it reads TPLLAGILSGTIFWLLYVWLF. Over 382–392 the chain is Lumenal; that stretch reads KMLPATFDDEP. The helical transmembrane segment at 393 to 413 threads the bilayer; it reads ILNLTVFALFAGVVFLLTKLL. Residues 414–489 lie on the Cytoplasmic side of the membrane; sequence QSDPGYIVPA…YNYIGFRNHK (76 aa). The 51-residue stretch at 446 to 496 folds into the DHHC domain; sequence HFCIHSWIRLPLRAKYKRFVHSVILRYDHYCPWIYNYIGFRNHKIFIYFIL. C476 serves as the catalytic S-palmitoyl cysteine intermediate. A helical transmembrane segment spans residues 490 to 510; sequence IFIYFILLLDLGILALAKLCL. The Lumenal segment spans residues 511–543; the sequence is EYFDELKDHAKNKDALKCSILSKDLCAGFTYDP. A helical transmembrane segment spans residues 544 to 564; it reads FTLFLLEWVCVQGMWILALSF. Over 565-724 the chain is Cytoplasmic; that stretch reads VQFFECLKGV…ERVISIEEIV (160 aa).

It belongs to the DHHC palmitoyltransferase family. AKR/ZDHHC17 subfamily.

It localises to the early endosome membrane. The protein localises to the golgi apparatus membrane. The enzyme catalyses L-cysteinyl-[protein] + hexadecanoyl-CoA = S-hexadecanoyl-L-cysteinyl-[protein] + CoA. Functionally, palmitoyltransferase specific for casein kinase 1. This is Palmitoyltransferase AKR1 (AKR1) from Eremothecium gossypii (strain ATCC 10895 / CBS 109.51 / FGSC 9923 / NRRL Y-1056) (Yeast).